The following is a 706-amino-acid chain: Fatty acid oxidation complex subunit alpha (706 aa).

Residues 1–188 (MEKTFNLTRR…KMGLVNDVVP (188 aa)) form an enoyl-CoA hydratase region. The tract at residues 308 to 706 (RKVKKAVILG…TMARENVSFF (399 aa)) is 3-hydroxyacyl-CoA dehydrogenase.

It in the N-terminal section; belongs to the enoyl-CoA hydratase/isomerase family. This sequence in the central section; belongs to the 3-hydroxyacyl-CoA dehydrogenase family. Heterotetramer of two alpha chains (FadJ) and two beta chains (FadI).

The protein localises to the cytoplasm. The enzyme catalyses a (3S)-3-hydroxyacyl-CoA = a (2E)-enoyl-CoA + H2O. It catalyses the reaction a 4-saturated-(3S)-3-hydroxyacyl-CoA = a (3E)-enoyl-CoA + H2O. The catalysed reaction is a (3S)-3-hydroxyacyl-CoA + NAD(+) = a 3-oxoacyl-CoA + NADH + H(+). It carries out the reaction (3S)-3-hydroxybutanoyl-CoA = (3R)-3-hydroxybutanoyl-CoA. The protein operates within lipid metabolism; fatty acid beta-oxidation. Functionally, catalyzes the formation of a hydroxyacyl-CoA by addition of water on enoyl-CoA. Also exhibits 3-hydroxyacyl-CoA epimerase and 3-hydroxyacyl-CoA dehydrogenase activities. The protein is Fatty acid oxidation complex subunit alpha of Shewanella putrefaciens (strain CN-32 / ATCC BAA-453).